A 315-amino-acid chain; its full sequence is Methionyl-tRNA formyltransferase (315 aa).

Ser113–Pro116 provides a ligand contact to (6S)-5,6,7,8-tetrahydrofolate.

It belongs to the Fmt family.

The catalysed reaction is L-methionyl-tRNA(fMet) + (6R)-10-formyltetrahydrofolate = N-formyl-L-methionyl-tRNA(fMet) + (6S)-5,6,7,8-tetrahydrofolate + H(+). Its function is as follows. Attaches a formyl group to the free amino group of methionyl-tRNA(fMet). The formyl group appears to play a dual role in the initiator identity of N-formylmethionyl-tRNA by promoting its recognition by IF2 and preventing the misappropriation of this tRNA by the elongation apparatus. This Vibrio vulnificus (strain YJ016) protein is Methionyl-tRNA formyltransferase.